Reading from the N-terminus, the 151-residue chain is MKLILKETISTLGREGDLIDVKAGYGRNYLLPQGKAVLATATNVAELEKNQAEIQAKIAKETAIAEKVAEKLQAINLVIEQLAGDDGRLFGSVTNSDICAALAAQDIVLDKRQIILPDPIKTVSETPVLIKVGFQVATEVVVKVVPLSTKA.

Belongs to the bacterial ribosomal protein bL9 family.

In terms of biological role, binds to the 23S rRNA. The sequence is that of Large ribosomal subunit protein bL9 from Desulfotalea psychrophila (strain LSv54 / DSM 12343).